The chain runs to 94 residues: Co-chaperonin GroES (94 aa).

The protein belongs to the GroES chaperonin family. In terms of assembly, heptamer of 7 subunits arranged in a ring. Interacts with the chaperonin GroEL.

Its subcellular location is the cytoplasm. Functionally, together with the chaperonin GroEL, plays an essential role in assisting protein folding. The GroEL-GroES system forms a nano-cage that allows encapsulation of the non-native substrate proteins and provides a physical environment optimized to promote and accelerate protein folding. GroES binds to the apical surface of the GroEL ring, thereby capping the opening of the GroEL channel. This chain is Co-chaperonin GroES, found in Bacillus sp. (strain PS3).